The sequence spans 255 residues: Ribosomal RNA small subunit methyltransferase A (255 aa).

S-adenosyl-L-methionine is bound by residues Asn13, Leu15, Gly40, Glu61, Asp85, and Asn103.

Belongs to the class I-like SAM-binding methyltransferase superfamily. rRNA adenine N(6)-methyltransferase family. RsmA subfamily.

It localises to the cytoplasm. It catalyses the reaction adenosine(1518)/adenosine(1519) in 16S rRNA + 4 S-adenosyl-L-methionine = N(6)-dimethyladenosine(1518)/N(6)-dimethyladenosine(1519) in 16S rRNA + 4 S-adenosyl-L-homocysteine + 4 H(+). In terms of biological role, specifically dimethylates two adjacent adenosines (A1518 and A1519) in the loop of a conserved hairpin near the 3'-end of 16S rRNA in the 30S particle. May play a critical role in biogenesis of 30S subunits. This is Ribosomal RNA small subunit methyltransferase A from Dechloromonas aromatica (strain RCB).